A 230-amino-acid polypeptide reads, in one-letter code: Large ribosomal subunit protein uL1 (230 aa).

Belongs to the universal ribosomal protein uL1 family. As to quaternary structure, part of the 50S ribosomal subunit.

Its function is as follows. Binds directly to 23S rRNA. The L1 stalk is quite mobile in the ribosome, and is involved in E site tRNA release. Functionally, protein L1 is also a translational repressor protein, it controls the translation of the L11 operon by binding to its mRNA. In Acholeplasma laidlawii (strain PG-8A), this protein is Large ribosomal subunit protein uL1.